A 121-amino-acid polypeptide reads, in one-letter code: Large ribosomal subunit protein uL14 (121 aa).

Belongs to the universal ribosomal protein uL14 family. In terms of assembly, part of the 50S ribosomal subunit. Forms a cluster with proteins L3 and L19. In the 70S ribosome, L14 and L19 interact and together make contacts with the 16S rRNA in bridges B5 and B8.

Binds to 23S rRNA. Forms part of two intersubunit bridges in the 70S ribosome. This is Large ribosomal subunit protein uL14 from Opitutus terrae (strain DSM 11246 / JCM 15787 / PB90-1).